A 408-amino-acid polypeptide reads, in one-letter code: CinA-like protein (408 aa).

Belongs to the CinA family.

In Thermotoga maritima (strain ATCC 43589 / DSM 3109 / JCM 10099 / NBRC 100826 / MSB8), this protein is CinA-like protein.